Reading from the N-terminus, the 969-residue chain is Translation initiation factor IF-2 (969 aa).

Residues 50 to 370 are disordered; sequence SFASKSAPAN…QAPSVGGVRL (321 aa). A compositionally biased stretch (low complexity) spans 54–76; that stretch reads KSAPANGAKPGPAASARPGAKPT. The segment covering 77-87 has biased composition (pro residues); it reads PGGPRPGPRTP. Over residues 88-102 the composition is skewed to low complexity; sequence APAASAPQAPAEQTA. The span at 112–124 shows a compositional bias: pro residues; it reads AVKPGPAPTPARP. A compositionally biased stretch (low complexity) spans 125 to 164; that stretch reads AAPEAPAAKAAPEAPAQRPTPGGPRPGQQQQRPGAPAQGG. Residues 240–267 are compositionally biased toward pro residues; that stretch reads PGGPRPSPGSMPPRPNPGAMPQRTPRPG. Positions 269-340 are enriched in gly residues; the sequence is SAGGRPGRPG…GAAGAFGRPG (72 aa). Residues 344–353 show a composition bias toward basic residues; sequence RRGRKSKRQK. Residues 465–636 enclose the tr-type G domain; that stretch reads VRPPVVTVMG…AVLLTADAAL (172 aa). Residues 474–481 are G1; sequence GHVDHGKT. Position 474–481 (474–481) interacts with GTP; sequence GHVDHGKT. The G2 stretch occupies residues 499–503; it reads GITQH. Positions 524–527 are G3; the sequence is DTPG. GTP is bound by residues 524 to 528 and 578 to 581; these read DTPGH and NKID. Residues 578 to 581 form a G4 region; sequence NKID. A G5 region spans residues 614-616; the sequence is SAK.

Belongs to the TRAFAC class translation factor GTPase superfamily. Classic translation factor GTPase family. IF-2 subfamily.

The protein resides in the cytoplasm. In terms of biological role, one of the essential components for the initiation of protein synthesis. Protects formylmethionyl-tRNA from spontaneous hydrolysis and promotes its binding to the 30S ribosomal subunits. Also involved in the hydrolysis of GTP during the formation of the 70S ribosomal complex. The chain is Translation initiation factor IF-2 from Nocardia farcinica (strain IFM 10152).